Reading from the N-terminus, the 455-residue chain is Squamosa promoter-binding-like protein 16 (455 aa).

An SBP-type zinc finger spans residues 115 to 192 (CPSCAVDGCK…DGHNRRRRKP (78 aa)). Zn(2+)-binding residues include cysteine 118, cysteine 123, cysteine 140, histidine 143, cysteine 159, cysteine 162, histidine 166, and cysteine 178. The Bipartite nuclear localization signal signature appears at 175 to 191 (KRSCRKRLDGHNRRRRK). The disordered stretch occupies residues 182-204 (LDGHNRRRRKPQPDPMNSASYLA).

Expressed in young panicles.

The protein resides in the nucleus. Its function is as follows. Trans-acting factor that binds specifically to the consensus nucleotide sequence 5'-TNCGTACAA-3'. May be involved in panicle development. This is Squamosa promoter-binding-like protein 16 (SPL16) from Oryza sativa subsp. japonica (Rice).